The primary structure comprises 103 residues: Large ribosomal subunit protein bL21 (103 aa).

This sequence belongs to the bacterial ribosomal protein bL21 family. Part of the 50S ribosomal subunit. Contacts protein L20.

In terms of biological role, this protein binds to 23S rRNA in the presence of protein L20. The protein is Large ribosomal subunit protein bL21 of Yersinia pseudotuberculosis serotype O:1b (strain IP 31758).